The sequence spans 187 residues: UPF0301 protein BCI_0481 (187 aa).

The protein belongs to the UPF0301 (AlgH) family.

The chain is UPF0301 protein BCI_0481 from Baumannia cicadellinicola subsp. Homalodisca coagulata.